The sequence spans 131 residues: Small ribosomal subunit protein uS8 (131 aa).

The protein belongs to the universal ribosomal protein uS8 family. In terms of assembly, part of the 30S ribosomal subunit. Contacts proteins S5 and S12.

In terms of biological role, one of the primary rRNA binding proteins, it binds directly to 16S rRNA central domain where it helps coordinate assembly of the platform of the 30S subunit. The protein is Small ribosomal subunit protein uS8 of Nautilia profundicola (strain ATCC BAA-1463 / DSM 18972 / AmH).